A 202-amino-acid polypeptide reads, in one-letter code: N-(5'-phosphoribosyl)anthranilate isomerase (202 aa).

This sequence belongs to the TrpF family.

The catalysed reaction is N-(5-phospho-beta-D-ribosyl)anthranilate = 1-(2-carboxyphenylamino)-1-deoxy-D-ribulose 5-phosphate. It functions in the pathway amino-acid biosynthesis; L-tryptophan biosynthesis; L-tryptophan from chorismate: step 3/5. In Listeria monocytogenes serotype 4a (strain HCC23), this protein is N-(5'-phosphoribosyl)anthranilate isomerase.